Here is a 625-residue protein sequence, read N- to C-terminus: Phosphomethylpyrimidine synthase (625 aa).

Substrate-binding positions include Asn230, Met259, Tyr288, His324, 344 to 346, 385 to 388, and Glu424; these read SRG and DGLR. His428 contributes to the Zn(2+) binding site. Tyr451 lines the substrate pocket. His492 is a Zn(2+) binding site. 3 residues coordinate [4Fe-4S] cluster: Cys572, Cys575, and Cys580.

Belongs to the ThiC family. In terms of assembly, homodimer. [4Fe-4S] cluster is required as a cofactor.

It catalyses the reaction 5-amino-1-(5-phospho-beta-D-ribosyl)imidazole + S-adenosyl-L-methionine = 4-amino-2-methyl-5-(phosphooxymethyl)pyrimidine + CO + 5'-deoxyadenosine + formate + L-methionine + 3 H(+). It participates in cofactor biosynthesis; thiamine diphosphate biosynthesis. Its function is as follows. Catalyzes the synthesis of the hydroxymethylpyrimidine phosphate (HMP-P) moiety of thiamine from aminoimidazole ribotide (AIR) in a radical S-adenosyl-L-methionine (SAM)-dependent reaction. This chain is Phosphomethylpyrimidine synthase, found in Xanthomonas oryzae pv. oryzae (strain MAFF 311018).